The following is a 525-amino-acid chain: Bifunctional purine biosynthesis protein PurH (525 aa).

The 147-residue stretch at 10-156 (HRIPIRRALV…KNHPSVAIVT (147 aa)) folds into the MGS-like domain.

Belongs to the PurH family.

It carries out the reaction (6R)-10-formyltetrahydrofolate + 5-amino-1-(5-phospho-beta-D-ribosyl)imidazole-4-carboxamide = 5-formamido-1-(5-phospho-D-ribosyl)imidazole-4-carboxamide + (6S)-5,6,7,8-tetrahydrofolate. The enzyme catalyses IMP + H2O = 5-formamido-1-(5-phospho-D-ribosyl)imidazole-4-carboxamide. The protein operates within purine metabolism; IMP biosynthesis via de novo pathway; 5-formamido-1-(5-phospho-D-ribosyl)imidazole-4-carboxamide from 5-amino-1-(5-phospho-D-ribosyl)imidazole-4-carboxamide (10-formyl THF route): step 1/1. It functions in the pathway purine metabolism; IMP biosynthesis via de novo pathway; IMP from 5-formamido-1-(5-phospho-D-ribosyl)imidazole-4-carboxamide: step 1/1. In Nocardioides sp. (strain ATCC BAA-499 / JS614), this protein is Bifunctional purine biosynthesis protein PurH.